A 328-amino-acid chain; its full sequence is Phenylalanine--tRNA ligase alpha subunit (328 aa).

A Mg(2+)-binding site is contributed by Glu245.

This sequence belongs to the class-II aminoacyl-tRNA synthetase family. Phe-tRNA synthetase alpha subunit type 1 subfamily. In terms of assembly, tetramer of two alpha and two beta subunits. Mg(2+) is required as a cofactor.

The protein localises to the cytoplasm. The catalysed reaction is tRNA(Phe) + L-phenylalanine + ATP = L-phenylalanyl-tRNA(Phe) + AMP + diphosphate + H(+). This is Phenylalanine--tRNA ligase alpha subunit from Helicobacter pylori (strain HPAG1).